An 813-amino-acid polypeptide reads, in one-letter code: Putative ATPase, plasma membrane-like (813 aa).

Residues 1-66 (MATGDSLEDI…KKKEHITLRF (66 aa)) are Cytoplasmic-facing. The chain crosses the membrane as a helical span at residues 67–86 (FALMFKPLSWVIQAAAIMAM). At 87 to 94 (LFANGDGR) the chain is on the extracellular side. A helical transmembrane segment spans residues 95-115 (QLFLGIVCLLIVNTIICYLKE). Residues 116-245 (DDAANVVAMA…GHFRKVVTEI (130 aa)) are Cytoplasmic-facing. The chain crosses the membrane as a helical span at residues 246 to 266 (ENLCVISIAIGISIEVIVMYW). Residues 267–275 (IQRRNFSDV) lie on the Extracellular side of the membrane. The helical transmembrane segment at 276–293 (INNLLVLVIGGIPLAMPT) threads the bilayer. Topologically, residues 294–555 (VLYVIMVTGS…ASRAILQQMK (262 aa)) are cytoplasmic. Catalysis depends on D331, which acts as the 4-aspartylphosphate intermediate. The Mg(2+) site is built by D500 and D504. A helical membrane pass occupies residues 556–577 (HYTIYAVSITIRVVFGFMFIAL). Residues 578–582 (IWKFD) lie on the Extracellular side of the membrane. A helical transmembrane segment spans residues 583 to 605 (FSPFMVLAIALLNEETTKAITMD). Topologically, residues 606–622 (NVTNPSPTPDSLKLKEI) are cytoplasmic. The chain crosses the membrane as a helical span at residues 623–643 (FATGVVYGSYMALITVVFFWA). The Extracellular segment spans residues 644–664 (AYRTDIFPRTFHVRDLRGNEA). The chain crosses the membrane as a helical span at residues 665–685 (EMMCALYLQVSIMSQALFFVI). Topologically, residues 686–697 (QSRSWFFVERPG) are cytoplasmic. A helical membrane pass occupies residues 698–718 (ELLFLSFVTVQTIATTLAVYA). At 719 to 726 (SWETARIE) the chain is on the extracellular side. A helical transmembrane segment spans residues 727-747 (GIGWSWAGVIWLYNIIFFFPL). The Cytoplasmic segment spans residues 748 to 813 (DIMKFGIRYI…SQDLRGVGWV (66 aa)). S776 carries the post-translational modification Phosphoserine.

The protein belongs to the cation transport ATPase (P-type) (TC 3.A.3) family. Type IIIA subfamily.

It localises to the membrane. This chain is Putative ATPase, plasma membrane-like, found in Arabidopsis thaliana (Mouse-ear cress).